The chain runs to 318 residues: Pyrimidine-specific ribonucleoside hydrolase RihA (318 aa).

His240 is a catalytic residue.

This sequence belongs to the IUNH family. RihA subfamily.

In terms of biological role, hydrolyzes cytidine or uridine to ribose and cytosine or uracil, respectively. This chain is Pyrimidine-specific ribonucleoside hydrolase RihA, found in Shewanella sp. (strain MR-4).